A 177-amino-acid chain; its full sequence is Small ribosomal subunit protein bS16 (177 aa).

Residues 80–177 (GIIAMPANGS…AAEAPKEEAK (98 aa)) are disordered. The span at 107–122 (AAPAAAPKAEAAPAAE) shows a compositional bias: low complexity.

Belongs to the bacterial ribosomal protein bS16 family.

The sequence is that of Small ribosomal subunit protein bS16 from Pelagibacter ubique (strain HTCC1062).